The chain runs to 194 residues: Fe/S biogenesis protein NfuA (194 aa).

[4Fe-4S] cluster is bound by residues C152 and C155.

This sequence belongs to the NfuA family. Homodimer. [4Fe-4S] cluster serves as cofactor.

In terms of biological role, involved in iron-sulfur cluster biogenesis. Binds a 4Fe-4S cluster, can transfer this cluster to apoproteins, and thereby intervenes in the maturation of Fe/S proteins. Could also act as a scaffold/chaperone for damaged Fe/S proteins. This Pseudomonas putida (strain GB-1) protein is Fe/S biogenesis protein NfuA.